The chain runs to 938 residues: Protein translocase subunit SecA (938 aa).

ATP is bound by residues Gln-90, 108-112, and Asp-504; that span reads GEGKT.

It belongs to the SecA family. In terms of assembly, monomer and homodimer. Part of the essential Sec protein translocation apparatus which comprises SecA, SecYEG and auxiliary proteins SecDF. Other proteins may also be involved.

The protein localises to the cell inner membrane. It localises to the cellular thylakoid membrane. It is found in the cytoplasm. It carries out the reaction ATP + H2O + cellular proteinSide 1 = ADP + phosphate + cellular proteinSide 2.. Its function is as follows. Part of the Sec protein translocase complex. Interacts with the SecYEG preprotein conducting channel. Has a central role in coupling the hydrolysis of ATP to the transfer of proteins into and across the cell membrane, serving as an ATP-driven molecular motor driving the stepwise translocation of polypeptide chains across the membrane. In terms of biological role, probably participates in protein translocation into and across both the cytoplasmic and thylakoid membranes in cyanobacterial cells. The polypeptide is Protein translocase subunit SecA (Picosynechococcus sp. (strain ATCC 27264 / PCC 7002 / PR-6) (Agmenellum quadruplicatum)).